Consider the following 218-residue polypeptide: ATP-dependent dethiobiotin synthetase BioD (218 aa).

10–15 (NAGKTT) lines the ATP pocket. Residue T14 participates in Mg(2+) binding. K35 is an active-site residue. T39 contacts substrate. E116 lines the Mg(2+) pocket. ATP contacts are provided by residues 116-119 (EGAG) and 176-177 (LR).

The protein belongs to the dethiobiotin synthetase family. In terms of assembly, homodimer. Mg(2+) is required as a cofactor.

It localises to the cytoplasm. The enzyme catalyses (7R,8S)-7,8-diammoniononanoate + CO2 + ATP = (4R,5S)-dethiobiotin + ADP + phosphate + 3 H(+). It participates in cofactor biosynthesis; biotin biosynthesis; biotin from 7,8-diaminononanoate: step 1/2. Catalyzes a mechanistically unusual reaction, the ATP-dependent insertion of CO2 between the N7 and N8 nitrogen atoms of 7,8-diaminopelargonic acid (DAPA, also called 7,8-diammoniononanoate) to form a ureido ring. The protein is ATP-dependent dethiobiotin synthetase BioD of Helicobacter pylori (strain J99 / ATCC 700824) (Campylobacter pylori J99).